Here is a 261-residue protein sequence, read N- to C-terminus: Kallikrein-1E2 (261 aa).

Positions 1–17 (MWFLVLCLDLSLGETGA) are cleaved as a signal peptide. Residues 18-24 (LPPIQSR) constitute a propeptide, activation peptide. Residues 25 to 258 (IIGGWECEKH…HLKWIKETIE (234 aa)) enclose the Peptidase S1 domain. 5 cysteine pairs are disulfide-bonded: Cys-31/Cys-173, Cys-50/Cys-66, Cys-152/Cys-219, Cys-184/Cys-198, and Cys-209/Cys-234. His-65 acts as the Charge relay system in catalysis. Residue Asn-79 is glycosylated (N-linked (GlcNAc...) asparagine). Residue Asp-120 is the Charge relay system of the active site. The active-site Charge relay system is Ser-213.

It belongs to the peptidase S1 family. Kallikrein subfamily. As to expression, detected in prostate and semen.

Its subcellular location is the secreted. The enzyme catalyses Preferential cleavage of Arg-|-Xaa bonds in small molecule substrates. Highly selective action to release kallidin (lysyl-bradykinin) from kininogen involves hydrolysis of Met-|-Xaa or Leu-|-Xaa.. Its function is as follows. Glandular kallikreins cleave Met-Lys and Arg-Ser bonds in kininogen to release Lys-bradykinin. In Equus caballus (Horse), this protein is Kallikrein-1E2 (KLK1E2).